Consider the following 628-residue polypeptide: Probable potassium transport system protein Kup (628 aa).

The next 12 membrane-spanning stretches (helical) occupy residues 20-40 (ALLTLGALGVVFGDIGTSPLY), 63-83 (IISMVLWTITLIVTVKYVMLV), 110-130 (FVAVAGMLGAALFYGDVVITP), 151-171 (FILPISLAVLIAIFAIQPLGT), 178-198 (FGPIMLLWFVTLAGLGIPQII), 212-232 (ALGLIVAEPFQAFVLLGAVVL), 256-276 (WFCVVMPALILTYLGQGALVI), 296-316 (IPLVILATIATVIASQAVISG), 346-366 (IYMPLVNGLLFVSVMVVVLVF), 375-395 (AYGLAVTGTLVLVSVLYLIYV), 398-418 (TWWKTALFIVFIGIPEVLLFA), and 422-442 (TKIHDGGWLPLLTAAVLIVVM).

Belongs to the HAK/KUP transporter (TC 2.A.72) family.

The protein localises to the cell membrane. It carries out the reaction K(+)(in) + H(+)(in) = K(+)(out) + H(+)(out). Its function is as follows. Transport of potassium into the cell. Likely operates as a K(+):H(+) symporter. The sequence is that of Probable potassium transport system protein Kup from Corynebacterium glutamicum (strain R).